The sequence spans 408 residues: MIRYISAMPSPEWEHETPRTLALLGSTGSIGTSALRVVEAHPHRFKVVALAGARNVEKLAAQAARWRPEHLGVLDATGAAKLRDLLPAGYAPHIHIGPEGYATMATLPEAGTVLSAQVGAAGLRATEAAARHGKVICLANKESLVLAGDIIRRHCAGSGAVILPVDSEHNAIFQALQGHDPASVRRIILTASGGPFRGRSRDDLAAVSCRDALAHPNWNMGAKISIDSATLMNKGLEVIEACHLYGVGIDDVGVVVHPQSIVHSLVEYEDGSQIAHLGTPDMRIAIAYCLTWPGVVDAGVPRLDLVKAGSLTFEEPDLHSFPCLELARRAYREGRGMPVVLNAANEVAVSLFLSDRIRFLDIPDIIARALDMHDGTTPHDIEGIEALDEATRRTVYERAGHSNTDGMA.

NADPH-binding residues include Thr27, Gly28, Ser29, Ile30, Ala53, Arg54, Asn55, and Asn140. Lys141 contributes to the 1-deoxy-D-xylulose 5-phosphate binding site. Residue Glu142 coordinates NADPH. Asp166 provides a ligand contact to Mn(2+). 1-deoxy-D-xylulose 5-phosphate contacts are provided by Ser167, Glu168, Ser192, and His215. Glu168 contacts Mn(2+). Residue Gly221 coordinates NADPH. 1-deoxy-D-xylulose 5-phosphate contacts are provided by Ser228, Asn233, Lys234, and Glu237. Residue Glu237 coordinates Mn(2+).

This sequence belongs to the DXR family. Mg(2+) serves as cofactor. It depends on Mn(2+) as a cofactor.

The catalysed reaction is 2-C-methyl-D-erythritol 4-phosphate + NADP(+) = 1-deoxy-D-xylulose 5-phosphate + NADPH + H(+). It participates in isoprenoid biosynthesis; isopentenyl diphosphate biosynthesis via DXP pathway; isopentenyl diphosphate from 1-deoxy-D-xylulose 5-phosphate: step 1/6. Catalyzes the NADPH-dependent rearrangement and reduction of 1-deoxy-D-xylulose-5-phosphate (DXP) to 2-C-methyl-D-erythritol 4-phosphate (MEP). The polypeptide is 1-deoxy-D-xylulose 5-phosphate reductoisomerase (Nitratidesulfovibrio vulgaris (strain ATCC 29579 / DSM 644 / CCUG 34227 / NCIMB 8303 / VKM B-1760 / Hildenborough) (Desulfovibrio vulgaris)).